Consider the following 186-residue polypeptide: Translation initiation factor IF-3 (186 aa).

The protein belongs to the IF-3 family. Monomer.

The protein localises to the cytoplasm. Functionally, IF-3 binds to the 30S ribosomal subunit and shifts the equilibrium between 70S ribosomes and their 50S and 30S subunits in favor of the free subunits, thus enhancing the availability of 30S subunits on which protein synthesis initiation begins. The protein is Translation initiation factor IF-3 of Borreliella burgdorferi (strain ATCC 35210 / DSM 4680 / CIP 102532 / B31) (Borrelia burgdorferi).